A 255-amino-acid polypeptide reads, in one-letter code: 4-hydroxy-tetrahydrodipicolinate reductase (255 aa).

Residues 9–14 (GFKGKM), aspartate 35, 89–91 (GTT), and 115–118 (APNF) contribute to the NAD(+) site. The Proton donor/acceptor role is filled by histidine 145. (S)-2,3,4,5-tetrahydrodipicolinate is bound at residue histidine 146. Lysine 149 serves as the catalytic Proton donor. 155 to 156 (GT) lines the (S)-2,3,4,5-tetrahydrodipicolinate pocket.

The protein belongs to the DapB family.

It is found in the cytoplasm. It catalyses the reaction (S)-2,3,4,5-tetrahydrodipicolinate + NAD(+) + H2O = (2S,4S)-4-hydroxy-2,3,4,5-tetrahydrodipicolinate + NADH + H(+). The catalysed reaction is (S)-2,3,4,5-tetrahydrodipicolinate + NADP(+) + H2O = (2S,4S)-4-hydroxy-2,3,4,5-tetrahydrodipicolinate + NADPH + H(+). The protein operates within amino-acid biosynthesis; L-lysine biosynthesis via DAP pathway; (S)-tetrahydrodipicolinate from L-aspartate: step 4/4. Catalyzes the conversion of 4-hydroxy-tetrahydrodipicolinate (HTPA) to tetrahydrodipicolinate. This is 4-hydroxy-tetrahydrodipicolinate reductase from Streptococcus pneumoniae (strain P1031).